Here is a 1185-residue protein sequence, read N- to C-terminus: DNA-directed RNA polymerase subunit beta' (1185 aa).

The Zn(2+) site is built by Cys-67, Cys-69, Cys-82, and Cys-85. Residues Asp-457, Asp-459, and Asp-461 each coordinate Mg(2+). Positions 802, 876, 883, and 886 each coordinate Zn(2+).

Belongs to the RNA polymerase beta' chain family. In terms of assembly, the RNAP catalytic core consists of 2 alpha, 1 beta, 1 beta' and 1 omega subunit. When a sigma factor is associated with the core the holoenzyme is formed, which can initiate transcription. Mg(2+) serves as cofactor. The cofactor is Zn(2+).

It carries out the reaction RNA(n) + a ribonucleoside 5'-triphosphate = RNA(n+1) + diphosphate. DNA-dependent RNA polymerase catalyzes the transcription of DNA into RNA using the four ribonucleoside triphosphates as substrates. This chain is DNA-directed RNA polymerase subunit beta', found in Clostridium novyi (strain NT).